A 522-amino-acid chain; its full sequence is Maturase K (522 aa).

Belongs to the intron maturase 2 family. MatK subfamily.

Its subcellular location is the plastid. The protein localises to the chloroplast. Functionally, usually encoded in the trnK tRNA gene intron. Probably assists in splicing its own and other chloroplast group II introns. The chain is Maturase K from Pillansia templemannii.